A 131-amino-acid polypeptide reads, in one-letter code: D-ribose pyranase (131 aa).

The Proton donor role is filled by histidine 20. Substrate-binding positions include aspartate 28, histidine 98, and 120 to 122; that span reads YAN.

This sequence belongs to the RbsD / FucU family. RbsD subfamily. In terms of assembly, homodecamer.

Its subcellular location is the cytoplasm. It catalyses the reaction beta-D-ribopyranose = beta-D-ribofuranose. It functions in the pathway carbohydrate metabolism; D-ribose degradation; D-ribose 5-phosphate from beta-D-ribopyranose: step 1/2. Functionally, catalyzes the interconversion of beta-pyran and beta-furan forms of D-ribose. This chain is D-ribose pyranase, found in Clostridium perfringens (strain 13 / Type A).